Consider the following 146-residue polypeptide: Large ribosomal subunit protein uL15 (146 aa).

Basic and acidic residues predominate over residues methionine 1–proline 10. The tract at residues methionine 1–alanine 41 is disordered.

Belongs to the universal ribosomal protein uL15 family. As to quaternary structure, part of the 50S ribosomal subunit.

Its function is as follows. Binds to the 23S rRNA. The polypeptide is Large ribosomal subunit protein uL15 (Mycobacterium bovis (strain BCG / Pasteur 1173P2)).